A 117-amino-acid chain; its full sequence is uncharacterized protein (117 aa).

The span at 1 to 12 shows a compositional bias: polar residues; sequence MAQNSVSLSAGD. Disordered stretches follow at residues 1–30 and 43–87; these read MAQN…NPSA and VTRL…SPYP.

This is an uncharacterized protein from Mus musculus (Mouse).